We begin with the raw amino-acid sequence, 1149 residues long: ATP-dependent helicase/deoxyribonuclease subunit B (1149 aa).

The UvrD-like helicase ATP-binding domain maps to 1 to 276; sequence MAIRYIFGRA…INLDIEERKV (276 aa). 8–15 is an ATP binding site; that stretch reads GRAGRGKS. Positions 273–586 constitute a UvrD-like helicase C-terminal domain; it reads ERKVLPKEKE…LVGSIERSKS (314 aa). [4Fe-4S] cluster contacts are provided by cysteine 786, cysteine 1105, cysteine 1108, and cysteine 1114.

Belongs to the helicase family. AddB/RexB type 1 subfamily. As to quaternary structure, heterodimer of AddA and AddB. Mg(2+) is required as a cofactor. It depends on [4Fe-4S] cluster as a cofactor.

In terms of biological role, the heterodimer acts as both an ATP-dependent DNA helicase and an ATP-dependent, dual-direction single-stranded exonuclease. Recognizes the chi site generating a DNA molecule suitable for the initiation of homologous recombination. The AddB subunit has 5' -&gt; 3' nuclease activity but not helicase activity. The sequence is that of ATP-dependent helicase/deoxyribonuclease subunit B from Alkaliphilus metalliredigens (strain QYMF).